Reading from the N-terminus, the 123-residue chain is Putative iron-sulfur cluster insertion protein ErpA (123 aa).

The iron-sulfur cluster site is built by cysteine 51, cysteine 115, and cysteine 117.

The protein belongs to the HesB/IscA family. Homodimer. Iron-sulfur cluster is required as a cofactor.

Functionally, required for insertion of 4Fe-4S clusters. This chain is Putative iron-sulfur cluster insertion protein ErpA, found in Burkholderia cenocepacia (strain HI2424).